A 392-amino-acid chain; its full sequence is Nicotinate phosphoribosyltransferase (392 aa).

Histidine 214 is subject to Phosphohistidine; by autocatalysis.

Belongs to the NAPRTase family. In terms of processing, transiently phosphorylated on a His residue during the reaction cycle. Phosphorylation strongly increases the affinity for substrates and increases the rate of nicotinate D-ribonucleotide production. Dephosphorylation regenerates the low-affinity form of the enzyme, leading to product release.

It catalyses the reaction nicotinate + 5-phospho-alpha-D-ribose 1-diphosphate + ATP + H2O = nicotinate beta-D-ribonucleotide + ADP + phosphate + diphosphate. It participates in cofactor biosynthesis; NAD(+) biosynthesis; nicotinate D-ribonucleotide from nicotinate: step 1/1. Its function is as follows. Catalyzes the synthesis of beta-nicotinate D-ribonucleotide from nicotinate and 5-phospho-D-ribose 1-phosphate at the expense of ATP. In Xanthomonas axonopodis pv. citri (strain 306), this protein is Nicotinate phosphoribosyltransferase.